Here is a 117-residue protein sequence, read N- to C-terminus: uncharacterized protein (117 aa).

Its subcellular location is the plastid. It localises to the chloroplast. This is an uncharacterized protein from Chlamydomonas reinhardtii (Chlamydomonas smithii).